A 130-amino-acid chain; its full sequence is Small ribosomal subunit protein uS9 (130 aa).

A disordered region spans residues 107–130 (DSRKVERKKPGLKKARKASQFSKR). Positions 111–130 (VERKKPGLKKARKASQFSKR) are enriched in basic residues.

The protein belongs to the universal ribosomal protein uS9 family.

In Streptococcus sanguinis (strain SK36), this protein is Small ribosomal subunit protein uS9.